Reading from the N-terminus, the 505-residue chain is uncharacterized protein (505 aa).

Residues 1 to 16 show a composition bias toward polar residues; that stretch reads MPPTASLTRSPPTASQ. Positions 1–474 are disordered; the sequence is MPPTASLTRS…TPPTASLTRT (474 aa). 2 stretches are compositionally biased toward low complexity: residues 17–33 and 40–59; these read TRTLPRASRTRTPPRAS and TASLRRTPSRASRTRTPPRA. The segment covering 66–78 has biased composition (polar residues); that stretch reads SRASLTRTLSRAS. Low complexity-rich tracts occupy residues 96-122, 129-140, and 147-158; these read SLTRTPPTASRTRSLPRASRTRTPPRT, PRTSQTRTPPRA, and SRASRTRTPPRA. Polar residues-rich tracts occupy residues 165–177 and 188–200; these read SRASLTRTPSRAS and TRTPSRASLTRTP. Residues 201–226 are compositionally biased toward low complexity; it reads PTASLTRASRTRTPPRTSQTRTPPRA. Polar residues-rich tracts occupy residues 233–254, 265–293, 309–329, 345–365, 373–383, 399–408, and 435–448; these read SRASLTRTPSRASLTRTPSRAS, TRTPSRASLTRTPPTASLTRTPPTASLTR, LTRTPPTASLTRSPPTASLTR, LTRTPSTASLTRTPSRASLTR, TRTPSRASLTR, LTRSPPTASL, and LTRSPSTASLTRTP. Positions 453-474 are enriched in low complexity; the sequence is LRRTPPRTSLTRTPPTASLTRT.

This is an uncharacterized protein from Homo sapiens (Human).